A 160-amino-acid chain; its full sequence is Large ribosomal subunit protein uL22c (160 aa).

Belongs to the universal ribosomal protein uL22 family. In terms of assembly, part of the 50S ribosomal subunit.

It localises to the plastid. The protein localises to the chloroplast. Its function is as follows. This protein binds specifically to 23S rRNA. The globular domain of the protein is located near the polypeptide exit tunnel on the outside of the subunit, while an extended beta-hairpin is found that lines the wall of the exit tunnel in the center of the 70S ribosome. The sequence is that of Large ribosomal subunit protein uL22c (rpl22) from Aethionema cordifolium (Lebanon stonecress).